Here is a 51-residue protein sequence, read N- to C-terminus: Large ribosomal subunit protein eL39 (51 aa).

It belongs to the eukaryotic ribosomal protein eL39 family.

The protein is Large ribosomal subunit protein eL39 of Thermococcus sibiricus (strain DSM 12597 / MM 739).